Consider the following 276-residue polypeptide: NH(3)-dependent NAD(+) synthetase (276 aa).

Position 43-50 (43-50 (GISGGVDS)) interacts with ATP. Mg(2+) is bound at residue Asp49. Arg146 serves as a coordination point for deamido-NAD(+). Thr166 is an ATP binding site. A Mg(2+)-binding site is contributed by Glu171. Residues Lys179 and Asp186 each contribute to the deamido-NAD(+) site. ATP-binding residues include Lys195 and Thr217. 266 to 267 (HK) is a binding site for deamido-NAD(+).

Belongs to the NAD synthetase family. As to quaternary structure, homodimer.

The catalysed reaction is deamido-NAD(+) + NH4(+) + ATP = AMP + diphosphate + NAD(+) + H(+). The protein operates within cofactor biosynthesis; NAD(+) biosynthesis; NAD(+) from deamido-NAD(+) (ammonia route): step 1/1. Functionally, catalyzes the ATP-dependent amidation of deamido-NAD to form NAD. Uses ammonia as a nitrogen source. In Psychromonas ingrahamii (strain DSM 17664 / CCUG 51855 / 37), this protein is NH(3)-dependent NAD(+) synthetase.